The primary structure comprises 386 residues: MNQDDFRKLLATPKAETSQLKNFSSNKSQRLVFGRKHKTAKLEAPRALIKRKQLSHSTSSDITRHSNAKNSGKDTQFYEEPSSKQDIELHKLHEKLRNGQITTKEYSEKSKELGGDLNTTHLVRGLDRKLLEKVRSNELALDDSLLSSSEKEVDEEADKLLEKVAEESSHPESVSILEEKKKIPLYPNGQPKYRKILENGKKVKYLLDENGEILKRLVKKEKKLKNDNERLENEHRTEKLNVNANSLGKSFVKHDIPLPPVDLKLDIFEEVGEYDPFHENDKEPAELKAKDAFQLKGHHELDAPYHKKVFDTNQYSDLKPTNFMSQIHRLAKVQERKEEEERKKGKDGQIVDAGFGLVLSKDDTADIHELGESDDDDNVKRRKTKG.

3 disordered regions span residues 1-28 (MNQDDFRKLLATPKAETSQLKNFSSNKS), 46-85 (RALIKRKQLSHSTSSDITRHSNAKNSGKDTQFYEEPSSKQ), and 366-386 (DIHELGESDDDDNVKRRKTKG). Positions 15–28 (AETSQLKNFSSNKS) are enriched in polar residues.

It is found in the nucleus. Its function is as follows. Required for meiotic chromosome segregation. This chain is Meiotic chromosome segregation protein C1539.02, found in Schizosaccharomyces pombe (strain 972 / ATCC 24843) (Fission yeast).